The chain runs to 486 residues: MKFPFPTLMVQGTTSDAGKTTLVAALCRLLAQQGVRVVPFKPQNMALNSAVTADGGEIGRAQALQAVAAGLPPHTDMNPILLKPSSDTGAQVIIHGRARNDMNARDYHAYKPIAMQAVLESYGRLSAQYETVLVEGAGSPAEVNLRDRDIANMGFAEAVDCPVILVADIDRGGVFAHIIGTLACLSESERKRTIGFVINRFRGDISLLEPGLRWLEEQTGKPVLAVLPYLHGLFLDAEDAVEQTQTARGAFRIVVPVPPRISNHTDFDALRAHPDVDLQLIGPGQPIPAADLIILPGSKNTRGDLDWLIANGWREALIRHARYGGKIIGICGGYQMLGKTIADPQGVEGLPGISQGLALLDITTVLTPEKQLEQVHGMCAFADTDAAVSGYEIHMGLSEGEACSHPAFVIAGRPEGARSADDQILGSYLHGMFDTPSACSALLRWAGLDSDVAVDTARLREASLDRIAQAAQPLLDALCALDPPTA.

Residues 250–438 (AFRIVVPVPP…LHGMFDTPSA (189 aa)) form the GATase cobBQ-type domain. The Nucleophile role is filled by cysteine 331. Residue histidine 430 is part of the active site.

Belongs to the CobB/CobQ family. CobQ subfamily.

It functions in the pathway cofactor biosynthesis; adenosylcobalamin biosynthesis. Catalyzes amidations at positions B, D, E, and G on adenosylcobyrinic A,C-diamide. NH(2) groups are provided by glutamine, and one molecule of ATP is hydrogenolyzed for each amidation. The polypeptide is Cobyric acid synthase (Herminiimonas arsenicoxydans).